A 198-amino-acid chain; its full sequence is Peptide deformylase (198 aa).

Residues Cys123 and His167 each contribute to the Fe cation site. Residue Glu168 is part of the active site. Residue His171 participates in Fe cation binding.

It belongs to the polypeptide deformylase family. Requires Fe(2+) as cofactor.

It carries out the reaction N-terminal N-formyl-L-methionyl-[peptide] + H2O = N-terminal L-methionyl-[peptide] + formate. Functionally, removes the formyl group from the N-terminal Met of newly synthesized proteins. Requires at least a dipeptide for an efficient rate of reaction. N-terminal L-methionine is a prerequisite for activity but the enzyme has broad specificity at other positions. In Ureaplasma parvum serovar 3 (strain ATCC 27815 / 27 / NCTC 11736), this protein is Peptide deformylase.